Here is a 152-residue protein sequence, read N- to C-terminus: Nucleoside diphosphate kinase B (152 aa).

Positions 1-66 (MANLERTFIA…DRPFFPGLVK (66 aa)) are interaction with AKAP13. ATP is bound by residues Lys12, Phe60, Arg88, Thr94, Arg105, and Asn115. Residue His118 is the Pros-phosphohistidine intermediate of the active site.

The protein belongs to the NDK family. As to quaternary structure, hexamer of two different chains: An and B (A6, A5B, A4B2, A3B3, A2B4, AB5, B6). Interacts with CAPN8. Interacts with AKAP13. Interacts with ITGB1BP1 (via C-terminal domain region). Interacts with BCL2L10. The cofactor is Mg(2+). In terms of processing, the N-terminus is blocked.

Its subcellular location is the cytoplasm. It is found in the cell projection. It localises to the lamellipodium. The protein localises to the ruffle. The protein resides in the nucleus. The catalysed reaction is a 2'-deoxyribonucleoside 5'-diphosphate + ATP = a 2'-deoxyribonucleoside 5'-triphosphate + ADP. The enzyme catalyses a ribonucleoside 5'-diphosphate + ATP = a ribonucleoside 5'-triphosphate + ADP. It carries out the reaction ATP + protein L-histidine = ADP + protein N-phospho-L-histidine.. Its function is as follows. Major role in the synthesis of nucleoside triphosphates other than ATP. The ATP gamma phosphate is transferred to the NDP beta phosphate via a ping-pong mechanism, using a phosphorylated active-site intermediate. Negatively regulates Rho activity by interacting with AKAP13/LBC. Acts as a transcriptional activator of the MYC gene; binds DNA non-specifically. Binds to both single-stranded guanine- and cytosine-rich strands within the nuclease hypersensitive element (NHE) III(1) region of the MYC gene promoter. Does not bind to duplex NHE III(1). Has G-quadruplex (G4) DNA-binding activity, which is independent of its nucleotide-binding and kinase activity. Binds both folded and unfolded G4 with similar low nanomolar affinities. Stabilizes folded G4s regardless of whether they are prefolded or not. Exhibits histidine protein kinase activity. In Rattus norvegicus (Rat), this protein is Nucleoside diphosphate kinase B (Nme2).